The sequence spans 276 residues: Orotidine 5'-phosphate decarboxylase (276 aa).

Lys93 acts as the Proton donor in catalysis.

It belongs to the OMP decarboxylase family. Type 2 subfamily.

It carries out the reaction orotidine 5'-phosphate + H(+) = UMP + CO2. The protein operates within pyrimidine metabolism; UMP biosynthesis via de novo pathway; UMP from orotate: step 2/2. The chain is Orotidine 5'-phosphate decarboxylase from Halorubrum lacusprofundi (strain ATCC 49239 / DSM 5036 / JCM 8891 / ACAM 34).